A 156-amino-acid chain; its full sequence is Arginine repressor (156 aa).

The protein belongs to the ArgR family.

It localises to the cytoplasm. The protein operates within amino-acid biosynthesis; L-arginine biosynthesis [regulation]. Functionally, regulates arginine biosynthesis genes. This Escherichia fergusonii (strain ATCC 35469 / DSM 13698 / CCUG 18766 / IAM 14443 / JCM 21226 / LMG 7866 / NBRC 102419 / NCTC 12128 / CDC 0568-73) protein is Arginine repressor.